Consider the following 347-residue polypeptide: GMP reductase (347 aa).

A108–A131 is a binding site for NADP(+). K(+) is bound by residues G181 and G183. Catalysis depends on C186, which acts as the Thioimidate intermediate. NADP(+) is bound at residue I216 to V239.

It belongs to the IMPDH/GMPR family. GuaC type 1 subfamily. Homotetramer.

The catalysed reaction is IMP + NH4(+) + NADP(+) = GMP + NADPH + 2 H(+). Functionally, catalyzes the irreversible NADPH-dependent deamination of GMP to IMP. It functions in the conversion of nucleobase, nucleoside and nucleotide derivatives of G to A nucleotides, and in maintaining the intracellular balance of A and G nucleotides. This Shigella boydii serotype 18 (strain CDC 3083-94 / BS512) protein is GMP reductase.